We begin with the raw amino-acid sequence, 157 residues long: Recombination endonuclease VII (157 aa).

Zn(2+) contacts are provided by cysteine 23 and cysteine 26. A Ca(2+)-binding site is contributed by aspartate 40. Zn(2+) contacts are provided by cysteine 58 and cysteine 61. Asparagine 62 lines the Ca(2+) pocket.

As to quaternary structure, homodimer. It depends on Ca(2+) as a cofactor. Zn(2+) is required as a cofactor.

Cleaves DNA cruciform and Y-structures as well as heteroduplex loops. Resolves Holliday junctions, recognizes a broad spectrum of DNA substrates ranging from branched DNAs to single base mismatches. This Enterobacteria phage T4 (Bacteriophage T4) protein is Recombination endonuclease VII (49).